The following is an 809-amino-acid chain: Putative zinc metalloprotease TRE2 (809 aa).

2 stretches are compositionally biased toward polar residues: residues Met-1–Asn-12 and Pro-20–Met-30. The interval Met-1–Pro-66 is disordered. The Cytoplasmic segment spans residues Met-1–Arg-125. A compositionally biased stretch (low complexity) spans Ser-37–Ile-50. The helical; Signal-anchor for type II membrane protein transmembrane segment at Phe-126–Phe-146 threads the bilayer. Residues Asn-147–Lys-809 lie on the Extracellular side of the membrane. N-linked (GlcNAc...) asparagine glycosylation is present at Asn-228. The PA domain occupies Ser-255–Trp-349. N-linked (GlcNAc...) asparagine glycosylation is found at Asn-669 and Asn-736.

This sequence belongs to the peptidase M28 family. M28B subfamily.

The protein localises to the membrane. The sequence is that of Putative zinc metalloprotease TRE2 (TRE2) from Saccharomyces cerevisiae (strain ATCC 204508 / S288c) (Baker's yeast).